A 282-amino-acid chain; its full sequence is UPF0759 protein YunF (282 aa).

This sequence belongs to the UPF0759 family.

The sequence is that of UPF0759 protein YunF (yunF) from Bacillus subtilis (strain 168).